Reading from the N-terminus, the 100-residue chain is A-type ATP synthase subunit F (100 aa).

It belongs to the V-ATPase F subunit family. Has multiple subunits with at least A(3), B(3), C, D, E, F, H, I and proteolipid K(x).

Its subcellular location is the cell membrane. Its function is as follows. Component of the A-type ATP synthase that produces ATP from ADP in the presence of a proton gradient across the membrane. This chain is A-type ATP synthase subunit F, found in Methanocorpusculum labreanum (strain ATCC 43576 / DSM 4855 / Z).